A 406-amino-acid chain; its full sequence is MVSGTVGRGTALGAVLLALLAVPAQAGTAAAADLPAPDDTGLQAVLHTALSQGAPGAMVRVDDNGTIHQLSEGVADRATGRAITTTDRFRVGSVTKSFSAVVLLQLVDEGKLDLDASVNTYLPGLLPDDRITVRQVMSHRSGLYDYTNDMFAQTVPGFESVRNKVFSYQDLITLSLKHGVTNAPGAAYSYSNTNFVVAGMLIEKLTGHSVATEYQNRIFTPLNLTDTFYVHPDTVIPGTHANGYLTPDEAGGALVDSTEQTVSWAQSAGAVISSTQDLDTFFSALMSGQLMSAAQLAQMQQWTTVNSTQGYGLGLRRRDLSCGISVYGHTGTVQGYYTYAFASKDGKRSVTALANTSNNVNVLNTMARTLESAFCGKPTTAKLRSATSSATTVERHEDIAPGIARD.

Residues 1–31 (MVSGTVGRGTALGAVLLALLAVPAQAGTAAA) form the signal peptide. Ser93 (acyl-ester intermediate) is an active-site residue. Residues 151–154 (FAQT), 190–192 (YSN), Arg316, 330–332 (TGT), and 357–358 (SN) each bind substrate. A propeptide spanning residues 381–406 (AKLRSATSSATTVERHEDIAPGIARD) is cleaved from the precursor. The disordered stretch occupies residues 387–406 (TSSATTVERHEDIAPGIARD). Residues 393–406 (VERHEDIAPGIARD) show a composition bias toward basic and acidic residues.

It belongs to the peptidase S12 family.

The protein resides in the secreted. It catalyses the reaction Preferential cleavage: (Ac)2-L-Lys-D-Ala-|-D-Ala. Also transpeptidation of peptidyl-alanyl moieties that are N-acyl substituents of D-alanine.. Its pathway is cell wall biogenesis; peptidoglycan biosynthesis. Functionally, catalyzes distinct carboxypeptidation and transpeptidation reactions during the last stages of wall peptidoglycan synthesis. Mistaking a beta-lactam antibiotic molecule for a normal substrate (i.e. a D-alanyl-D-alanine-terminated peptide), it becomes immobilized in the form of a long-lived, serine-ester-linked acyl enzyme and thus behave as penicillin-binding protein (PBP). The protein is D-alanyl-D-alanine carboxypeptidase of Streptomyces sp. (strain R61).